The following is an 88-amino-acid chain: Small ribosomal subunit protein bS20 (88 aa).

2 disordered regions span residues 1–25 (MANSPQAKKRARQNERRFAINKARR) and 61–88 (GVTKGVMHKNTAARKMSRLSSRVKALGA).

It belongs to the bacterial ribosomal protein bS20 family.

Binds directly to 16S ribosomal RNA. The sequence is that of Small ribosomal subunit protein bS20 from Jannaschia sp. (strain CCS1).